Reading from the N-terminus, the 764-residue chain is FAST kinase domain-containing protein 5, mitochondrial (764 aa).

Residues 1-27 (MAATLKSLKLVRYRAFCSPSAFGAVRS) constitute a mitochondrion transit peptide. S95 bears the Phosphoserine mark. The residue at position 507 (K507) is an N6-acetyllysine. The 61-residue stretch at 697–757 (LAVQFTNRNQ…RLEKLAFLHE (61 aa)) folds into the RAP domain.

This sequence belongs to the FAST kinase family. Found in a complex with GRSF1, DDX28, DHX30 and FASTKD2. Associates with the 12S mitochondrial rRNA (12S mt-rRNA). As to expression, expression detected in spleen, thymus, testis, ovary, colon, heart, smooth muscle, kidney, brain, lung, liver and white adipose tissue with highest expression in heart, smooth muscle, liver and thyroid.

The protein resides in the mitochondrion matrix. It localises to the mitochondrion nucleoid. Its function is as follows. Plays an important role in the processing of non-canonical mitochondrial mRNA precursors. This is FAST kinase domain-containing protein 5, mitochondrial (FASTKD5) from Homo sapiens (Human).